We begin with the raw amino-acid sequence, 474 residues long: MAKNNLGTITQVTGAVVDVKFEGELPSILSALETDNHGNRLVLEVAQHLGESVVRTIAMDSTEGLVRGQQVTSTGGPITVPVGPQVLGRIMNVIGEPVDERGPVVTAQRYPIHRQAPTFAEQATETEILVTGIKVIDLIAPYTKGGKVGLFGGAGVGKTVLIQELINNVAKGHGGYSVFAGVGERTREGNDLYHEMIDAGIIDLEGDKSKVALVYGQMNEPPGARARVALAGLTQAEYFRDEEGQDVLFFVDNIFRFTQAGSEVSALLGRIPSAVGYQPTLATDMGALQERITSTKKGSITSVQAIYVPADDLTDPAPAASFAHLDATTTLNRSIAELGIYPAVDPLDSTSRALDPLVVGEEHYKVAREVQRVLQTYKSLQDIIAILGMDELSEEDRLVVARARKIQRFLSQPFHVAEVFTGSPGKLVSLEDTIKGFKGLVEGEYDHLPEQAFYMVGNMAEAIEKAKKMAAEAA.

152-159 (GGAGVGKT) is a binding site for ATP.

It belongs to the ATPase alpha/beta chains family. In terms of assembly, F-type ATPases have 2 components, CF(1) - the catalytic core - and CF(0) - the membrane proton channel. CF(1) has five subunits: alpha(3), beta(3), gamma(1), delta(1), epsilon(1). CF(0) has four main subunits: a(1), b(1), b'(1) and c(9-12).

Its subcellular location is the cell inner membrane. The enzyme catalyses ATP + H2O + 4 H(+)(in) = ADP + phosphate + 5 H(+)(out). Its function is as follows. Produces ATP from ADP in the presence of a proton gradient across the membrane. The catalytic sites are hosted primarily by the beta subunits. The chain is ATP synthase subunit beta from Rhodospirillum rubrum (strain ATCC 11170 / ATH 1.1.1 / DSM 467 / LMG 4362 / NCIMB 8255 / S1).